The sequence spans 964 residues: Chromatin assembly factor 1 subunit A (964 aa).

Residues 1 to 49 are binds to PCNA; sequence MLEEPECGAPGARGEAAAMDCKDRPAFPVKKLIQARLPFKRLNLVPKEK. A binds to CBX1 chromo shadow domain region spans residues 1–316; the sequence is MLEEPECGAP…LHTGPSPFPA (316 aa). Phosphoserine is present on residues Ser126, Ser141, and Ser144. Residues 146-232 are disordered; that stretch reads AQKNINGVPD…KDRDGWSEAG (87 aa). The segment covering 156–172 has biased composition (basic and acidic residues); sequence KAGDDRGLPKARQKDEL. A Glycyl lysine isopeptide (Lys-Gly) (interchain with G-Cter in SUMO1); alternate cross-link involves residue Lys185. Residue Lys185 forms a Glycyl lysine isopeptide (Lys-Gly) (interchain with G-Cter in SUMO2); alternate linkage. Positions 236-249 match the PxVxL motif motif; sequence FKGKMPVVVLQDIL. Disordered regions lie at residues 253 to 437 and 601 to 641; these read PPAR…REEE and DSDE…VPHG. A compositionally biased stretch (low complexity) spans 284 to 298; sequence LSHSSLSSSSPTSSP. Phosphoserine is present on Ser312. Positions 329–453 form a coiled coil; it reads RGSAEKNKMK…KAEITRFFQK (125 aa). The span at 331-437 shows a compositional bias: basic and acidic residues; the sequence is SAEKNKMKLQ…EEEKRLREEE (107 aa). 2 stretches are compositionally biased toward acidic residues: residues 601 to 612 and 620 to 635; these read DSDEEWEEEEPG and GDDD…EDDG. The necessary for homodimerization and competence for chromatin assembly stretch occupies residues 644 to 680; it reads SEDEGVTEECADPENHKVRQKLKAKEWDEFLAKGKRF. The binds to p60 stretch occupies residues 662–964; it reads RQKLKAKEWD…FVSPSSLRLS (303 aa). A Phosphothreonine modification is found at Thr723. The disordered stretch occupies residues 769-799; sequence RDAGSPEDSAASPPSPGPARPQTPTASEDVA. Positions 770 to 780 are enriched in low complexity; the sequence is DAGSPEDSAAS. Phosphoserine is present on residues Ser773, Ser783, Ser811, Ser876, and Ser881. A disordered region spans residues 859–878; sequence EDSGSVPAPGPGQGMPVSLK. 2 disordered regions span residues 897 to 920 and 933 to 964; these read DGQV…DDEG and IQAP…LRLS. Acidic residues predominate over residues 904 to 920; it reads DLDDFQADTEEEDDDEG. Polar residues predominate over residues 949–964; that stretch reads MDTSESFVSPSSLRLS. Ser959 carries the phosphoserine modification.

This sequence belongs to the CHAF1A family. In terms of assembly, homodimer. Part of the CAF-1 complex that contains RBBP4, CHAF1B and CHAF1A. CHAF1A binds directly to CHAF1B. Only minor amounts of RBBP4 are complexed with CHAF1A and CHAF1B in G1 phase. Interacts with PCNA; the interaction is direct. Interacts (via the PxVxL motif) with CBX5; the interaction is direct. Interacts with MBD1. Interacts with histones H3.1, H3.2 and H3.1t.

The protein resides in the nucleus. Functionally, acts as a component of the histone chaperone complex chromatin assembly factor 1 (CAF-1), which assembles histone octamers onto DNA during replication and repair. CAF-1 performs the first step of the nucleosome assembly process, bringing newly synthesized histones H3 and H4 to replicating DNA; histones H2A/H2B can bind to this chromatin precursor subsequent to DNA replication to complete the histone octamer. It may play a role in heterochromatin maintenance in proliferating cells by bringing newly synthesized cbx proteins to heterochromatic DNA replication foci. The polypeptide is Chromatin assembly factor 1 subunit A (CHAF1A) (Bos taurus (Bovine)).